The following is a 127-amino-acid chain: Glycine cleavage system H protein (127 aa).

Residues 24-106 enclose the Lipoyl-binding domain; the sequence is TATLGISAFA…YGEGWLVKVQ (83 aa). Position 65 is an N6-lipoyllysine (Lys-65).

It belongs to the GcvH family. In terms of assembly, the glycine cleavage system is composed of four proteins: P, T, L and H. The cofactor is (R)-lipoate.

Its function is as follows. The glycine cleavage system catalyzes the degradation of glycine. The H protein shuttles the methylamine group of glycine from the P protein to the T protein. This chain is Glycine cleavage system H protein, found in Thermosynechococcus vestitus (strain NIES-2133 / IAM M-273 / BP-1).